The sequence spans 319 residues: HTH-type transcriptional regulator YidZ (319 aa).

An HTH lysR-type domain is found at 8-65; it reads LDLNLLLCLQLLMQERSVTKAAKRMNVTPSAVSKSLAKLRAWFDDPLFVNSPLGLSPT. Positions 25-44 form a DNA-binding region, H-T-H motif; that stretch reads VTKAAKRMNVTPSAVSKSLA.

The protein belongs to the LysR transcriptional regulatory family.

Functionally, involved in anaerobic NO protection. This chain is HTH-type transcriptional regulator YidZ, found in Escherichia coli O157:H7 (strain EC4115 / EHEC).